Here is a 65-residue protein sequence, read N- to C-terminus: Large ribosomal subunit protein bL35 (65 aa).

This sequence belongs to the bacterial ribosomal protein bL35 family.

This Parabacteroides distasonis (strain ATCC 8503 / DSM 20701 / CIP 104284 / JCM 5825 / NCTC 11152) protein is Large ribosomal subunit protein bL35.